A 407-amino-acid chain; its full sequence is Immunoglobulin superfamily member 5 (407 aa).

Residues 1-266 (MGQKERSTAD…LGFSLPTWGK (266 aa)) lie on the Extracellular side of the membrane. Ig-like V-type domains lie at 39–139 (NEVI…LTVQ) and 142–231 (GELF…ATVN). Asn-59, Asn-103, Asn-210, and Asn-231 each carry an N-linked (GlcNAc...) asparagine glycan. Disulfide bonds link Cys-60–Cys-123 and Cys-163–Cys-215. A helical membrane pass occupies residues 267-285 (VGLGLAGTMLLTPTCTLTI). Over 286–407 (RCCCCRRRCC…PEKVSNTTVV (122 aa)) the chain is Cytoplasmic. Over residues 320–331 (KSEKEKTNKETE) the composition is skewed to basic and acidic residues. The segment at 320 to 407 (KSEKEKTNKE…PEKVSNTTVV (88 aa)) is disordered. Over residues 389 to 407 (PQASFNLASPEKVSNTTVV) the composition is skewed to polar residues.

This sequence belongs to the immunoglobulin superfamily. Interacts with MAGI1 at tight junctions, forms a tripartite complex with NPHS1. Interacts with LNX1 isoform 2 via its PDZ 2 domain, it may also interact with other isoforms containing this domain.

The protein resides in the apical cell membrane. It localises to the cell junction. It is found in the tight junction. Functionally, provides, together with MAGI1, an adhesion machinery at tight junctions, which may regulate the permeability of kidney glomerulus and small intestinal epithelial cells. Mediates calcium-independent homophilic cell adhesion. In testis, it may function as a cell adhesion molecule rather than a tight-junction protein. It may participate in the adhesion between spermatogonia-spermatogonia, spermatogonia-Sertoli cells, and Sertoli cells-Sertoli cells. The protein is Immunoglobulin superfamily member 5 (IGSF5) of Homo sapiens (Human).